Here is a 119-residue protein sequence, read N- to C-terminus: UPF0231 protein ECA3777 (119 aa).

The protein belongs to the UPF0231 family.

The sequence is that of UPF0231 protein ECA3777 from Pectobacterium atrosepticum (strain SCRI 1043 / ATCC BAA-672) (Erwinia carotovora subsp. atroseptica).